A 785-amino-acid chain; its full sequence is Conidiophore development regulator abaA (785 aa).

Residues 1 to 22 (MAEWQTECMLPPTQPGFEGVGP) are disordered. Positions 130-204 (GKDGEPVWSD…QVLDSFLKGD (75 aa)) form a DNA-binding region, TEA. A disordered region spans residues 213–232 (EQPADRSNGQPPSAGPRWRN).

It belongs to the TEC1 family.

The protein resides in the nucleus. In terms of biological role, brlA, abaA and wetA are pivotal regulators of conidiophore development and conidium maturation. They act individually and together to regulate their own expression and that of numerous other sporulation-specific genes. Binds to the sequence 5'-CATTCY-3', where Y is a pyrimidine, making both major- and minor-groove contacts. Controls expression of wetA. The protein is Conidiophore development regulator abaA of Aspergillus oryzae (strain ATCC 42149 / RIB 40) (Yellow koji mold).